The chain runs to 51 residues: NEKSGSCPDMSMPIPPLGICKTLCNSDSGCPNVQKCCKNGCGFMTCTTPVP.

Residues 1–50 enclose the WAP domain; it reads NEKSGSCPDMSMPIPPLGICKTLCNSDSGCPNVQKCCKNGCGFMTCTTPV. 4 disulfides stabilise this stretch: Cys-7/Cys-37, Cys-20/Cys-41, Cys-24/Cys-36, and Cys-30/Cys-46.

In terms of tissue distribution, expressed by the venom gland.

The protein localises to the secreted. Its function is as follows. Damages membranes of susceptible bacteria. Has no hemolytic activity. Not toxic to mice. Does not inhibit the proteinases elastase and cathepsin G. The sequence is that of Nawaprin from Naja nigricollis (Black-necked spitting cobra).